Reading from the N-terminus, the 314-residue chain is Malate dehydrogenase (314 aa).

Residues 11–16 (GSGNIG) and aspartate 35 each bind NAD(+). Substrate-binding residues include arginine 84 and arginine 90. NAD(+) is bound by residues asparagine 97 and 120-122 (ITN). Residues asparagine 122 and arginine 153 each coordinate substrate. Histidine 177 (proton acceptor) is an active-site residue.

The protein belongs to the LDH/MDH superfamily. MDH type 3 family.

It catalyses the reaction (S)-malate + NAD(+) = oxaloacetate + NADH + H(+). Catalyzes the reversible oxidation of malate to oxaloacetate. This chain is Malate dehydrogenase, found in Rickettsia rickettsii (strain Iowa).